Reading from the N-terminus, the 790-residue chain is MSNQPKKYETQNIANSTEESDAFDIVTIPVPSEEPQESDQTEEHESGIEQFSESHAIHVEEQSDRSFSSLEPDSEQLMKEVISPRQVSYTPQHHEKQYAMQSPNDDSLAFLDKIKAIKESLQESMEDSLATVKVVLIPVGQEIVISFKVDTVLKYLKDYFSHLLGIPLSVLQIRYSGKILRNNETLVQHGVKPQEIIQVEIFSTNPDLYPVKRIDGLTDVSQIITVTVQTGLDRYQQVAVEIVKSDFHKPFLGGFRHKVTGVEYHHAGTQTVPKKIPERLSVFCRDTQTVFQKKNLQQTTNTTSTQMTNIGVYVSNMTDKLVTPGKYFSAAEYHAQRLKAVIVIQTYYRQWHAKIFVEDLRRQKSLRLEWETQQELRKIREKEEWVKLDYHRRHNPKTSEDFEFLYNALEFWRQEELKRINQSFTGAERKAALCELLEKETQIIASIGRHRYIAYTANQEAAIQAFLDKCSAPKIWRTPNGKTIEMDTQFTIRARELQNIYKCIMLKNISQDERLDVLLTLKHTVKEHECKLTQEILELIDREVDLMMRGVKHHNLEGLRKRIATLFFHYIKTPLFNPEVAKYLKVPQDPLKFYKKIYFCHSCQLYLPSTEFSISSTSRRIYRCRNCISLENEAQKRESFLKYRCLLQQLYFTEADYEDDSKIAFLMQLQDIQYLTENIWASQSVLSAWDDLSDLVMVRWNKSLEWSPWNCILLTKDEAAAHLNLTSIEEGYERSFIHKIKHKHILAKNYFSQIPVLASFILDDPEIDEIRWKHHSDTTPKIIESQRPPP.

The segment covering M1 to T17 has biased composition (polar residues). The segment at M1–E49 is disordered. The Ubiquitin-like domain occupies A130–P206. The region spanning R337 to L366 is the IQ domain.

Component of the axonemal radial spoke 1 (RS1) complex, at least composed of spoke head proteins RSPH1, RSPH3, RSPH9 and the cilia-specific component RSPH4A or sperm-specific component RSPH6A, spoke stalk proteins RSPH14, DNAJB13, DYDC1, ROPN1L and NME5, and the anchor protein IQUB. Does not appear to be part of radial spoke complexes 2 or 3 (RS2 or RS3). Interacts with CALM1. Interacts with DNAJB13. Interacts with DYNLL2. Interacts with NME5. Interacts with RSPH3. Interacts with RSPH9. Interacts with ZMYND10. Interacts with calmodulin; the interaction occurs in conditions of low but not high calcium.

It localises to the cytoplasm. The protein resides in the cytoskeleton. The protein localises to the flagellum axoneme. It is found in the cell projection. Its subcellular location is the cilium. Its function is as follows. Adapter protein that anchors the radial spoke 1 (RS1) complex to the A microtubule of outer doublet microtubules in axonemes. The triple radial spokes (RS1, RS2 and RS3) are required to modulate beating of the sperm flagellum. May play a role in inhibiting signaling via MAPK1/ERK2 and MAPK3/ERK1. Additionally, may play a role in the functioning of cilia. Not required for the functioning of tracheal or ependymal cilia. The protein is IQ motif and ubiquitin-like domain-containing protein (IQUB) of Macaca fascicularis (Crab-eating macaque).